The primary structure comprises 97 residues: ESAT-6-like protein EsxG (97 aa).

An N-acetylserine modification is found at Ser2.

This sequence belongs to the WXG100 family. CFP-10 subfamily. As to quaternary structure, forms a tight 1:1 complex with EsxH.

It localises to the secreted. EsxG, in complex with EsxH, disrupts ESCRT function and impairs host phagosome maturation, thereby promoting intracellular bacterial growth. The complex acts by interacting, via EsxH, with the host hepatocyte growth factor-regulated tyrosine kinase substrate (HGS/HRS), a component of the ESCRT machinery. EsxG stabilizes EsxH in the host cytosol. This is ESAT-6-like protein EsxG from Mycobacterium tuberculosis (strain ATCC 25618 / H37Rv).